Here is a 278-residue protein sequence, read N- to C-terminus: Putative pyruvate, phosphate dikinase regulatory protein (278 aa).

Residue 149 to 156 (GVSRSSKT) coordinates ADP.

It belongs to the pyruvate, phosphate/water dikinase regulatory protein family. PDRP subfamily.

The enzyme catalyses N(tele)-phospho-L-histidyl/L-threonyl-[pyruvate, phosphate dikinase] + ADP = N(tele)-phospho-L-histidyl/O-phospho-L-threonyl-[pyruvate, phosphate dikinase] + AMP + H(+). It carries out the reaction N(tele)-phospho-L-histidyl/O-phospho-L-threonyl-[pyruvate, phosphate dikinase] + phosphate + H(+) = N(tele)-phospho-L-histidyl/L-threonyl-[pyruvate, phosphate dikinase] + diphosphate. Its function is as follows. Bifunctional serine/threonine kinase and phosphorylase involved in the regulation of the pyruvate, phosphate dikinase (PPDK) by catalyzing its phosphorylation/dephosphorylation. The protein is Putative pyruvate, phosphate dikinase regulatory protein of Erythrobacter litoralis (strain HTCC2594).